The sequence spans 319 residues: tRNA-cytidine(32) 2-sulfurtransferase (319 aa).

The short motif at 43-48 (SGGKDS) is the PP-loop motif element. [4Fe-4S] cluster contacts are provided by C118, C121, and C209.

This sequence belongs to the TtcA family. Homodimer. The cofactor is Mg(2+). [4Fe-4S] cluster serves as cofactor.

The protein localises to the cytoplasm. It catalyses the reaction cytidine(32) in tRNA + S-sulfanyl-L-cysteinyl-[cysteine desulfurase] + AH2 + ATP = 2-thiocytidine(32) in tRNA + L-cysteinyl-[cysteine desulfurase] + A + AMP + diphosphate + H(+). The protein operates within tRNA modification. Catalyzes the ATP-dependent 2-thiolation of cytidine in position 32 of tRNA, to form 2-thiocytidine (s(2)C32). The sulfur atoms are provided by the cysteine/cysteine desulfurase (IscS) system. The protein is tRNA-cytidine(32) 2-sulfurtransferase of Neisseria meningitidis serogroup C / serotype 2a (strain ATCC 700532 / DSM 15464 / FAM18).